Consider the following 356-residue polypeptide: 3-dehydroquinate synthase (356 aa).

NAD(+)-binding positions include 101–105 (GVIGD), 125–126 (TT), K138, and K147. E180, H243, and H260 together coordinate Zn(2+).

It belongs to the sugar phosphate cyclases superfamily. Dehydroquinate synthase family. Co(2+) is required as a cofactor. Zn(2+) serves as cofactor. It depends on NAD(+) as a cofactor.

The protein localises to the cytoplasm. The enzyme catalyses 7-phospho-2-dehydro-3-deoxy-D-arabino-heptonate = 3-dehydroquinate + phosphate. Its pathway is metabolic intermediate biosynthesis; chorismate biosynthesis; chorismate from D-erythrose 4-phosphate and phosphoenolpyruvate: step 2/7. In terms of biological role, catalyzes the conversion of 3-deoxy-D-arabino-heptulosonate 7-phosphate (DAHP) to dehydroquinate (DHQ). The sequence is that of 3-dehydroquinate synthase from Alkaliphilus metalliredigens (strain QYMF).